Here is a 464-residue protein sequence, read N- to C-terminus: V-type ATP synthase beta chain (464 aa).

This sequence belongs to the ATPase alpha/beta chains family.

In terms of biological role, produces ATP from ADP in the presence of a proton gradient across the membrane. The V-type beta chain is a regulatory subunit. In Streptococcus gordonii (strain Challis / ATCC 35105 / BCRC 15272 / CH1 / DL1 / V288), this protein is V-type ATP synthase beta chain.